Here is a 430-residue protein sequence, read N- to C-terminus: Serine--tRNA ligase (430 aa).

The segment at 47-66 (AQAEQNKASKEAGAAKGRGD) is disordered. Residue 231–233 (TSE) participates in L-serine binding. 262-264 (RSE) provides a ligand contact to ATP. Glu-285 contributes to the L-serine binding site. 349–352 (EISS) lines the ATP pocket. L-serine is bound at residue Ser-385.

It belongs to the class-II aminoacyl-tRNA synthetase family. Type-1 seryl-tRNA synthetase subfamily. As to quaternary structure, homodimer. The tRNA molecule binds across the dimer.

It localises to the cytoplasm. It carries out the reaction tRNA(Ser) + L-serine + ATP = L-seryl-tRNA(Ser) + AMP + diphosphate + H(+). The catalysed reaction is tRNA(Sec) + L-serine + ATP = L-seryl-tRNA(Sec) + AMP + diphosphate + H(+). It participates in aminoacyl-tRNA biosynthesis; selenocysteinyl-tRNA(Sec) biosynthesis; L-seryl-tRNA(Sec) from L-serine and tRNA(Sec): step 1/1. Functionally, catalyzes the attachment of serine to tRNA(Ser). Is also able to aminoacylate tRNA(Sec) with serine, to form the misacylated tRNA L-seryl-tRNA(Sec), which will be further converted into selenocysteinyl-tRNA(Sec). This chain is Serine--tRNA ligase, found in Paracoccus denitrificans (strain Pd 1222).